The chain runs to 166 residues: Lipoprotein signal peptidase (166 aa).

The next 4 helical transmembrane spans lie at 11–31 (LNLVIILVVFIFDRTTKLYIL), 42–62 (IYITPFLNLFLIWNKGIAFGL), 69–89 (VIYNSITILIGLIIIAIIFMM), and 99–119 (FFALIAGGAFGNFYDRIVYTA). Residues Asp122 and Asp140 contribute to the active site. The helical transmembrane segment at 133–153 (WFVFNVADIFITIGVFCLILV) threads the bilayer.

The protein belongs to the peptidase A8 family.

It is found in the cell inner membrane. It catalyses the reaction Release of signal peptides from bacterial membrane prolipoproteins. Hydrolyzes -Xaa-Yaa-Zaa-|-(S,diacylglyceryl)Cys-, in which Xaa is hydrophobic (preferably Leu), and Yaa (Ala or Ser) and Zaa (Gly or Ala) have small, neutral side chains.. It participates in protein modification; lipoprotein biosynthesis (signal peptide cleavage). Functionally, this protein specifically catalyzes the removal of signal peptides from prolipoproteins. The sequence is that of Lipoprotein signal peptidase from Pelagibacter ubique (strain HTCC1062).